A 547-amino-acid chain; its full sequence is Chaperonin GroEL (547 aa).

ATP is bound by residues 30 to 33, Lys-51, 87 to 91, Gly-415, and Asp-495; these read TLGP and DGTTT.

This sequence belongs to the chaperonin (HSP60) family. Forms a cylinder of 14 subunits composed of two heptameric rings stacked back-to-back. Interacts with the co-chaperonin GroES.

It localises to the cytoplasm. It catalyses the reaction ATP + H2O + a folded polypeptide = ADP + phosphate + an unfolded polypeptide.. Together with its co-chaperonin GroES, plays an essential role in assisting protein folding. The GroEL-GroES system forms a nano-cage that allows encapsulation of the non-native substrate proteins and provides a physical environment optimized to promote and accelerate protein folding. The protein is Chaperonin GroEL of Shewanella halifaxensis (strain HAW-EB4).